Consider the following 324-residue polypeptide: NADH-ubiquinone oxidoreductase chain 1 (324 aa).

Transmembrane regions (helical) follow at residues 9-29, 75-95, 106-126, 142-162, 177-197, 228-248, 259-279, and 300-320; these read LTMA…LTLV, ILFI…WIPL, LGLL…LWSG, VAQT…VIML, PLYL…STLA, LFFL…AILF, ELFP…FLWV, and LPLT…YAGI.

Belongs to the complex I subunit 1 family.

It localises to the mitochondrion inner membrane. The catalysed reaction is a ubiquinone + NADH + 5 H(+)(in) = a ubiquinol + NAD(+) + 4 H(+)(out). Functionally, core subunit of the mitochondrial membrane respiratory chain NADH dehydrogenase (Complex I) that is believed to belong to the minimal assembly required for catalysis. Complex I functions in the transfer of electrons from NADH to the respiratory chain. The immediate electron acceptor for the enzyme is believed to be ubiquinone. The polypeptide is NADH-ubiquinone oxidoreductase chain 1 (MT-ND1) (Struthio camelus (Common ostrich)).